Here is a 514-residue protein sequence, read N- to C-terminus: Glutamyl-tRNA(Gln) amidotransferase subunit A (514 aa).

Catalysis depends on charge relay system residues K76 and S151. Residue S175 is the Acyl-ester intermediate of the active site.

The protein belongs to the amidase family. GatA subfamily. As to quaternary structure, heterotrimer of A, B and C subunits.

The enzyme catalyses L-glutamyl-tRNA(Gln) + L-glutamine + ATP + H2O = L-glutaminyl-tRNA(Gln) + L-glutamate + ADP + phosphate + H(+). Allows the formation of correctly charged Gln-tRNA(Gln) through the transamidation of misacylated Glu-tRNA(Gln) in organisms which lack glutaminyl-tRNA synthetase. The reaction takes place in the presence of glutamine and ATP through an activated gamma-phospho-Glu-tRNA(Gln). The protein is Glutamyl-tRNA(Gln) amidotransferase subunit A of Salinibacter ruber (strain DSM 13855 / M31).